The following is a 97-amino-acid chain: MALSLEEVRRIAVLARLRLSEEEERTFAGQLSAILDHVRQLEELDVTAVEPMTHALAAGELPARREDAVFPSLTPEEATAAAPAREGTAFKVPRIIE.

The protein belongs to the GatC family. As to quaternary structure, heterotrimer of A, B and C subunits.

The enzyme catalyses L-glutamyl-tRNA(Gln) + L-glutamine + ATP + H2O = L-glutaminyl-tRNA(Gln) + L-glutamate + ADP + phosphate + H(+). It catalyses the reaction L-aspartyl-tRNA(Asn) + L-glutamine + ATP + H2O = L-asparaginyl-tRNA(Asn) + L-glutamate + ADP + phosphate + 2 H(+). Its function is as follows. Allows the formation of correctly charged Asn-tRNA(Asn) or Gln-tRNA(Gln) through the transamidation of misacylated Asp-tRNA(Asn) or Glu-tRNA(Gln) in organisms which lack either or both of asparaginyl-tRNA or glutaminyl-tRNA synthetases. The reaction takes place in the presence of glutamine and ATP through an activated phospho-Asp-tRNA(Asn) or phospho-Glu-tRNA(Gln). The polypeptide is Aspartyl/glutamyl-tRNA(Asn/Gln) amidotransferase subunit C (Anaeromyxobacter sp. (strain K)).